Here is a 585-residue protein sequence, read N- to C-terminus: Proline--tRNA ligase (585 aa).

Lys173 is covalently cross-linked (Isoglutamyl lysine isopeptide (Lys-Gln) (interchain with Q-Cter in protein Pup)).

It belongs to the class-II aminoacyl-tRNA synthetase family. ProS type 1 subfamily. Homodimer.

The protein resides in the cytoplasm. It catalyses the reaction tRNA(Pro) + L-proline + ATP = L-prolyl-tRNA(Pro) + AMP + diphosphate. Its function is as follows. Catalyzes the attachment of proline to tRNA(Pro) in a two-step reaction: proline is first activated by ATP to form Pro-AMP and then transferred to the acceptor end of tRNA(Pro). As ProRS can inadvertently accommodate and process non-cognate amino acids such as alanine and cysteine, to avoid such errors it has two additional distinct editing activities against alanine. One activity is designated as 'pretransfer' editing and involves the tRNA(Pro)-independent hydrolysis of activated Ala-AMP. The other activity is designated 'posttransfer' editing and involves deacylation of mischarged Ala-tRNA(Pro). The misacylated Cys-tRNA(Pro) is not edited by ProRS. The sequence is that of Proline--tRNA ligase (proS) from Mycolicibacterium smegmatis (strain ATCC 700084 / mc(2)155) (Mycobacterium smegmatis).